A 159-amino-acid polypeptide reads, in one-letter code: Small ribosomal subunit protein uS9 (159 aa).

This sequence belongs to the universal ribosomal protein uS9 family.

The sequence is that of Small ribosomal subunit protein uS9 from Rickettsia africae (strain ESF-5).